We begin with the raw amino-acid sequence, 359 residues long: Type-1 angiotensin II receptor B (359 aa).

At 1–25 (MILNSSIEDGIKRIQDDCPKAGRHN) the chain is on the extracellular side. Asn-4 carries an N-linked (GlcNAc...) asparagine glycan. 2 residues coordinate angiotensin II: Gln-15 and Asp-17. 2 cysteine pairs are disulfide-bonded: Cys-18/Cys-274 and Cys-101/Cys-180. Residues 26–55 (YIFVMIPTLYSIIFVVGIFGNSLVVIVIYF) traverse the membrane as a helical segment. The Cytoplasmic segment spans residues 56–61 (YMKLKT). The helical transmembrane segment at 62 to 89 (VASVFLLNLALADLCFLLTLPLWAVYTA) threads the bilayer. Topologically, residues 90–98 (MEYQWPFGN) are extracellular. Residues 99–125 (HLCKIASASVSFNLYASVFLLTCLSID) traverse the membrane as a helical segment. The Cytoplasmic segment spans residues 126-141 (RYLAIVHPMKSRLRRT). The chain crosses the membrane as a helical span at residues 142 to 165 (MLVAKVTCIIIWLMAGLASLPAVI). Residues 166-190 (HRNVYFIENTNITVCAFHYESQNST) lie on the Extracellular side of the membrane. Position 167 (Arg-167) interacts with angiotensin II. N-linked (GlcNAc...) asparagine glycosylation occurs at Asn-176. Angiotensin II contacts are provided by Phe-182, His-183, and Tyr-184. The N-linked (GlcNAc...) asparagine glycan is linked to Asn-188. Residues 191 to 216 (LPIGLGLTKNILGFVFPFVIILTSYT) form a helical membrane-spanning segment. Angiotensin II is bound at residue Lys-199. At 217-239 (LIWKALKKAYKIQKNTPRNDDIF) the chain is on the cytoplasmic side. A helical transmembrane segment spans residues 240–268 (RIIMAIVLFFFFSWVPHQIFSFLDVLIQL). Topologically, residues 269 to 278 (GVIHDCEIAD) are extracellular. Residues 279-304 (VVDTAMPITICIAYFNNCLNPLFYGF) form a helical membrane-spanning segment. The Cytoplasmic segment spans residues 305 to 359 (LGKKFKRYFLQLLKYIPPKARSHAGLSTKMSTLSYRPSDNMSSSARKSAYCFEVE). Residue Cys-355 is the site of S-palmitoyl cysteine attachment.

The protein belongs to the G-protein coupled receptor 1 family. As to quaternary structure, interacts with MAS1. Interacts with ARRB1. Interacts with FLNA (via filamin repeat 21); increases PKA-mediated phosphorylation of FLNA. C-terminal Ser or Thr residues may be phosphorylated.

It is found in the cell membrane. In terms of biological role, receptor for angiotensin II, a vasoconstricting peptide, which acts as a key regulator of blood pressure and sodium retention by the kidney. The activated receptor in turn couples to G-alpha proteins G(q) (GNAQ, GNA11, GNA14 or GNA15) and thus activates phospholipase C and increases the cytosolic Ca(2+) concentrations, which in turn triggers cellular responses such as stimulation of protein kinase C. In Mus musculus (Mouse), this protein is Type-1 angiotensin II receptor B (Agtr1b).